The sequence spans 600 residues: Integrator complex subunit 11 (600 aa).

Residues His-68, His-70, Asp-72, His-73, His-157, and Asp-178 each contribute to the Zn(2+) site. The short motif at 68 to 73 (HFHLDH) is the HXHXDH motif element. The active site involves Glu-203. A Glycyl lysine isopeptide (Lys-Gly) (interchain with G-Cter in SUMO) cross-link involves residue Lys-381. His-414 contributes to the Zn(2+) binding site. Glycyl lysine isopeptide (Lys-Gly) (interchain with G-Cter in SUMO) cross-links involve residues Lys-462 and Lys-475. Positions 469 to 479 (LLPEAKKPRLL) match the Nuclear localization signal motif.

This sequence belongs to the metallo-beta-lactamase superfamily. RNA-metabolizing metallo-beta-lactamase-like family. INTS11 subfamily. In terms of assembly, component of the Integrator complex, composed of core subunits INTS1, INTS2, INTS3, INTS4, INTS5, INTS6, INTS7, INTS8, INTS9/RC74, INTS10, INTS11/CPSF3L, INTS12, INTS13, INTS14 and INTS15. The core complex associates with protein phosphatase 2A subunits PPP2CA and PPP2R1A, to form the Integrator-PP2A (INTAC) complex. INTS11 is part of the RNA endonuclease subcomplex, composed of INTS4, INTS9, INTS11 and inositol hexakisphosphate (InsP6). Interacts with WDR73; interaction is required for the assembly of the RNA endonuclease subcomplex in the cytoplasm. Interacts with BRAT1; interaction is required for the assembly of the RNA endonuclease subcomplex and inhibits the endonuclease activity of INTS11 before formation of mature integrator complex. The cofactor is Zn(2+). In terms of processing, sumoylated; sumoylation regulates its subcellular location and is required for integrator complex integrity.

The protein localises to the nucleus. It localises to the cytoplasm. The RNA endonuclease activity is inhibited by BRAT1 that forms hyrogen bond and hydrophobic interactions with the active site. RNA endonuclease component of the integrator complex, a multiprotein complex that terminates RNA polymerase II (Pol II) transcription in the promoter-proximal region of genes. The integrator complex provides a quality checkpoint during transcription elongation by driving premature transcription termination of transcripts that are unfavorably configured for transcriptional elongation: the complex terminates transcription by (1) catalyzing dephosphorylation of the C-terminal domain (CTD) of Pol II subunit POLR2A/RPB1 and SUPT5H/SPT5, (2) degrading the exiting nascent RNA transcript via endonuclease activity and (3) promoting the release of Pol II from bound DNA. The integrator complex is also involved in terminating the synthesis of non-coding Pol II transcripts, such as enhancer RNAs (eRNAs), small nuclear RNAs (snRNAs), telomerase RNAs and long non-coding RNAs (lncRNAs). Within the integrator complex, INTS11 constitutes the RNA endonuclease subunit that degrades exiting nascent RNA transcripts. Mediates recruitment of cytoplasmic dynein to the nuclear envelope, probably as component of the integrator complex. The polypeptide is Integrator complex subunit 11 (Mus musculus (Mouse)).